A 214-amino-acid polypeptide reads, in one-letter code: Ribonuclease HII (214 aa).

One can recognise an RNase H type-2 domain in the interval serine 18–cysteine 208. A divalent metal cation contacts are provided by aspartate 24, glutamate 25, and aspartate 116.

Belongs to the RNase HII family. Mn(2+) is required as a cofactor. The cofactor is Mg(2+).

It is found in the cytoplasm. The catalysed reaction is Endonucleolytic cleavage to 5'-phosphomonoester.. Functionally, endonuclease that specifically degrades the RNA of RNA-DNA hybrids. This is Ribonuclease HII from Thermosynechococcus vestitus (strain NIES-2133 / IAM M-273 / BP-1).